Here is a 61-residue protein sequence, read N- to C-terminus: MALKITQHKGLVGANPKQRKNMAALGLKHINHSVVHQDTPVVRGMVNVVRHMVSVEEVAGE.

Belongs to the universal ribosomal protein uL30 family. In terms of assembly, part of the 50S ribosomal subunit.

This is Large ribosomal subunit protein uL30 from Corynebacterium diphtheriae (strain ATCC 700971 / NCTC 13129 / Biotype gravis).